Here is a 199-residue protein sequence, read N- to C-terminus: UPF0056 membrane protein bbp_399 (199 aa).

The next 6 helical transmembrane spans lie at 7–29 (VTILLILIMDPLGNLPIFMSILK), 39–58 (ILIREMMIALLIMLLFLFAG), 71–93 (TVSVSGGIILFLIAIKMIFPTYE), 108–130 (FLVPLAIPLVAGPSLLATLMLLS), 137–156 (ILYLIGSLLIAWMITVVILL), and 176–198 (LMGLILIMLSTQMFLDGIKSWFY).

Belongs to the UPF0056 (MarC) family.

The protein localises to the cell membrane. The sequence is that of UPF0056 membrane protein bbp_399 from Buchnera aphidicola subsp. Baizongia pistaciae (strain Bp).